Consider the following 315-residue polypeptide: Taste receptor type 2 member 3 (315 aa).

The Extracellular segment spans residues 1-5 (MGLTD). Residues 6 to 26 (GVFLIVCGAQFTLGILXNGFI) traverse the membrane as a helical segment. At 27-41 (GLVNGRSWFKTKRMS) the chain is on the cytoplasmic side. The helical transmembrane segment at 42–62 (LSDFIIATLALSRIILLCIIL) threads the bilayer. At 63–93 (TDSFLIVFSVKEHDSGIIMQLIDVFWTFTNH) the chain is on the extracellular side. Residues 94-114 (LSIWFATCLGVLYCLKIASFS) form a helical membrane-spanning segment. The Cytoplasmic portion of the chain corresponds to 115–127 (HPTFLWLKWRVSR). A helical transmembrane segment spans residues 128-148 (VMVWMLLGALLLSCGSTASLI). Residues 149-185 (NEFKLYSVLRGIEATRNVTEHFRKKRNEYYLIHVLGT) lie on the Extracellular side of the membrane. N-linked (GlcNAc...) asparagine glycosylation is present at Asn-165. A helical membrane pass occupies residues 186 to 206 (LWYLPPLVVSLASYFLLIFSL). Over 207 to 233 (GRHTRQMLQNSTSSRDPSTEAHKRAIR) the chain is Cytoplasmic. The chain crosses the membrane as a helical span at residues 234–254 (IILSFFFLFLLYFLAFLIASF). At 255–265 (GNFLPETKMAK) the chain is on the extracellular side. A helical transmembrane segment spans residues 266–286 (MIGEVMTMFYPAGHSFIVILG). Residues 287–315 (NSKLKQTFVEMLRCESGHLKPGSKGPIFS) lie on the Cytoplasmic side of the membrane.

This sequence belongs to the G-protein coupled receptor T2R family.

The protein resides in the membrane. In terms of biological role, gustducin-coupled receptor implicated in the perception of bitter compounds in the oral cavity and the gastrointestinal tract. Signals through PLCB2 and the calcium-regulated cation channel TRPM5. In Papio hamadryas (Hamadryas baboon), this protein is Taste receptor type 2 member 3 (TAS2R3).